The following is a 440-amino-acid chain: Trigger factor (440 aa).

Positions 163-248 constitute a PPIase FKBP-type domain; it reads GDILTVDFLG…AKALKRRVAP (86 aa).

Belongs to the FKBP-type PPIase family. Tig subfamily.

The protein resides in the cytoplasm. It carries out the reaction [protein]-peptidylproline (omega=180) = [protein]-peptidylproline (omega=0). In terms of biological role, involved in protein export. Acts as a chaperone by maintaining the newly synthesized protein in an open conformation. Functions as a peptidyl-prolyl cis-trans isomerase. This Acidiphilium cryptum (strain JF-5) protein is Trigger factor.